The following is a 276-amino-acid chain: Urease accessory protein UreD (276 aa).

It belongs to the UreD family. UreD, UreF and UreG form a complex that acts as a GTP-hydrolysis-dependent molecular chaperone, activating the urease apoprotein by helping to assemble the nickel containing metallocenter of UreC. The UreE protein probably delivers the nickel.

It localises to the cytoplasm. Required for maturation of urease via the functional incorporation of the urease nickel metallocenter. The chain is Urease accessory protein UreD from Verminephrobacter eiseniae (strain EF01-2).